A 425-amino-acid chain; its full sequence is 5-aminovalerate aminotransferase DavT (425 aa).

Residues 112 to 113, Tyr-139, and 240 to 243 each bind pyridoxal 5'-phosphate; these read GS and DEVQ. Residue Lys-269 is modified to N6-(pyridoxal phosphate)lysine. Thr-298 contributes to the pyridoxal 5'-phosphate binding site.

Belongs to the class-III pyridoxal-phosphate-dependent aminotransferase family. Pyridoxal 5'-phosphate serves as cofactor.

The enzyme catalyses 5-aminopentanoate + 2-oxoglutarate = 5-oxopentanoate + L-glutamate. In terms of biological role, catalyzes the conversion of 5-aminovalerate to 5-oxopentanoate. This is 5-aminovalerate aminotransferase DavT (davT) from Pseudomonas putida (strain ATCC 47054 / DSM 6125 / CFBP 8728 / NCIMB 11950 / KT2440).